Here is a 74-residue protein sequence, read N- to C-terminus: Protein SlyX homolog (74 aa).

Positions Gln54 to Tyr74 are disordered.

Belongs to the SlyX family.

This is Protein SlyX homolog from Neisseria gonorrhoeae (strain ATCC 700825 / FA 1090).